Consider the following 357-residue polypeptide: Protein RecA (357 aa).

73–80 (GPESSGKT) is an ATP binding site.

The protein belongs to the RecA family.

It localises to the cytoplasm. Functionally, can catalyze the hydrolysis of ATP in the presence of single-stranded DNA, the ATP-dependent uptake of single-stranded DNA by duplex DNA, and the ATP-dependent hybridization of homologous single-stranded DNAs. It interacts with LexA causing its activation and leading to its autocatalytic cleavage. The sequence is that of Protein RecA from Nitratidesulfovibrio vulgaris (strain DSM 19637 / Miyazaki F) (Desulfovibrio vulgaris).